The sequence spans 200 residues: Lipopolysaccharide core heptose(II)-phosphate phosphatase (200 aa).

The first 25 residues, 1 to 25, serve as a signal peptide directing secretion; the sequence is MLAFCRSSLKSKKYFIILLALAAIA.

This sequence belongs to the phosphoglycerate mutase family. Ais subfamily.

It localises to the periplasm. Its pathway is bacterial outer membrane biogenesis; lipopolysaccharide metabolism. Catalyzes the dephosphorylation of heptose(II) of the outer membrane lipopolysaccharide core. This chain is Lipopolysaccharide core heptose(II)-phosphate phosphatase, found in Shigella flexneri serotype 5b (strain 8401).